The chain runs to 624 residues: MKGQETRGFQSEVKQLLHLMIHSLYSNKEIFLRELISNASDAADKLRFRALSNPDLYEGDGELRVRVSFDKDKRTLTISDNGVGMTRDEVIDHLGTIAKSGTKSFLESLGSDQAKDSQLIGQFGVGFYSAFIVADKVTVRTRAAGEKPENGVFWESAGEGEYTVADITKEDRGTEITLHLREGEDEFLDDWRVRSIISKYSDHIALPVEIEKREEKDGETVISWEKINKAQALWTRNKSEITDEEYKEFYKHIAHDFNDPLTWSHNRVEGKQEYTSLLYIPSQAPWDMWNRDHKHGLKLYVQRVFIMDDAEQFMPNYLRFVRGLIDSSDLPLNVSREILQDSTVTRNLRNALTKRVLQMLEKLAKDDAEKYQTFWQQFGLVLKEGPAEDFANQEAIAKLLRFASTHTDSSAQTVSLEDYVSRMKEGQEKIYYITADSYAAAKSSPHLELLRKKGIEVLLLSDRIDEWMMNYLTEFDGKPFQSVSKVDESLEKLADEVDESAKEAEKALTPFIDRVKALLGERVKDVRLTHRLTDTPAIVSTDADEMSTQMAKLFAAAGQKVPEVKYIFELNPDHVLVKRAADTEDEAKFSEWVELLLDQALLAERGTLEDPNLFIRRMNQLLVS.

An a; substrate-binding region spans residues 1-336 (MKGQETRGFQ…SSDLPLNVSR (336 aa)). The segment at 337–552 (EILQDSTVTR…ADEMSTQMAK (216 aa)) is b. The segment at 553-624 (LFAAAGQKVP…IRRMNQLLVS (72 aa)) is c.

The protein belongs to the heat shock protein 90 family. As to quaternary structure, homodimer.

It is found in the cytoplasm. Molecular chaperone. Has ATPase activity. This Shigella boydii serotype 4 (strain Sb227) protein is Chaperone protein HtpG.